The following is a 449-amino-acid chain: Probable glycosyltransferase 5 (449 aa).

The segment covering 1–14 has biased composition (basic and acidic residues); that stretch reads MMEKHGGKVTSDRR. The tract at residues 1-24 is disordered; it reads MMEKHGGKVTSDRRAGRRQHGQRC. Residues 1-28 lie on the Cytoplasmic side of the membrane; the sequence is MMEKHGGKVTSDRRAGRRQHGQRCSASD. The helical; Signal-anchor for type II membrane protein transmembrane segment at 29-49 threads the bilayer; that stretch reads AAPLVVVVILIVAALFLILGP. The Lumenal segment spans residues 50–449; that stretch reads TGSSSFTVPR…HPTFRAARPT (400 aa). Residues 74-109 are disordered; the sequence is APPPPPPPAQMQAGANASSEEDSGLPPPRQLTDPPY. N-linked (GlcNAc...) asparagine glycosylation is found at Asn89, Asn413, and Asn422.

The protein belongs to the glycosyltransferase 34 family.

The protein resides in the golgi apparatus membrane. Functionally, probable glycosyltransferase that may be involved in the biosynthesis of xyloglucan. The sequence is that of Probable glycosyltransferase 5 from Oryza sativa subsp. japonica (Rice).